The chain runs to 179 residues: MATMLINHMLFLTSLLIVVFPVANAIPARDIDKLCKETTDVPFCLKYLGTDPRIPAARDLTDVLLIAITQSKMQVDDATTHIDRVRRKFNGPHGRRRIEVCKTNYGIASARFHTAWELGLQKSFWDVEKLARIGTNAVIDCENVWRRDGPIQTSPLTFYNMNVFKLSGIILLIFNKLVT.

The first 25 residues, Met-1–Ala-25, serve as a signal peptide directing secretion. Cystine bridges form between Cys-35–Cys-44 and Cys-101–Cys-141.

The protein belongs to the PMEI family. Expressed in seeds, buds, and mature flowers.

The protein resides in the secreted. It is found in the extracellular space. It localises to the apoplast. Functionally, pectin methylesterase (PME) inhibitor that targets PME from seeds and modulates PME activity and pectin methylesterification during seed germination. This chain is Pectinesterase inhibitor 5, found in Arabidopsis thaliana (Mouse-ear cress).